Consider the following 659-residue polypeptide: uncharacterized protein (659 aa).

16 consecutive transmembrane segments (helical) span residues 24–44 (TTLM…YGLF), 71–91 (FGAS…VMMV), 115–135 (IGWL…DSGV), 157–177 (RAWI…RVII), 183–203 (FVLL…GNAG), 214–234 (AVIV…TAAL), 242–262 (AVLI…AELV), 279–299 (LGLV…WALV), 311–331 (LTAL…VQTA), 365–385 (FDSL…AGFV), 393–413 (TWPV…VFTS), 433–453 (MTLN…TLAL), 490–510 (FILF…DTLV), 517–537 (EFMA…IIGI), 550–570 (IGLL…LMTM), and 596–616 (IGGA…IVAL).

This sequence to M.tuberculosis Rv0102.

It is found in the cell membrane. This is an uncharacterized protein from Mycobacterium leprae (strain TN).